Here is a 1145-residue protein sequence, read N- to C-terminus: DNA polymerase subunit gamma-1, mitochondrial (1145 aa).

A mitochondrion-targeting transit peptide spans 1 to 9 (MQFHLIRKY).

It belongs to the DNA polymerase type-A family. Component of the DNA polymerase gamma complex consisting of two subunits: the catalytic subunit DNApol-gamma/DNApolG1 and the accessory subunit PolG2/DNApol-gamma35. It depends on Mg(2+) as a cofactor.

Its subcellular location is the mitochondrion. It catalyses the reaction DNA(n) + a 2'-deoxyribonucleoside 5'-triphosphate = DNA(n+1) + diphosphate. Its activity is regulated as follows. Stimulated by KCl, and inhibited by the small molecules o 2',3'-dideoxythymidine 5'-triphosphate (d2TTP) and N-ethylmaleimide (NEM). Its function is as follows. As the catalytic component of the DNA polymerase gamma complex is involved in the replication of mitochondrial DNA (mtDNA). Has both 5'-3' DNA polymerase and a highly mispair-specific 3'-5' exonuclease activity. At the end of mtDNA replication DNA ends are ligated to produce a closed circular mtDNA molecule, its exonuclease activity is required for formation of these ligatable ends by preventing DNA synthesis from continuing past the 5'-end of downstream DNA into duplex DNA regions. Does not possess DNA primase activity, does not catalyze strand displacement synthesis and does not contain a 5'-3' exonuclease activity to catalyze nick translation. Important for promoting the elimination of paternal mitochondrial DNA during spermatogenesis, however its exact role in this function has not yet been identified and appears to be independent of its 3'-5'-exonuclease activity and only partially dependent on its DNA polymerase activity. The protein is DNA polymerase subunit gamma-1, mitochondrial of Drosophila melanogaster (Fruit fly).